Here is a 287-residue protein sequence, read N- to C-terminus: Putative S-adenosyl-L-methionine-dependent methyltransferase SACE_1742 (287 aa).

Residues aspartate 119 and 148–149 (DL) each bind S-adenosyl-L-methionine.

Belongs to the UPF0677 family.

Functionally, exhibits S-adenosyl-L-methionine-dependent methyltransferase activity. The sequence is that of Putative S-adenosyl-L-methionine-dependent methyltransferase SACE_1742 from Saccharopolyspora erythraea (strain ATCC 11635 / DSM 40517 / JCM 4748 / NBRC 13426 / NCIMB 8594 / NRRL 2338).